We begin with the raw amino-acid sequence, 172 residues long: Shikimate kinase (172 aa).

11 to 16 contributes to the ATP binding site; sequence GAGKST. Residue S15 participates in Mg(2+) binding. Substrate is bound by residues D33, R57, and G79. Residue R117 participates in ATP binding. R136 serves as a coordination point for substrate. R153 is a binding site for ATP.

It belongs to the shikimate kinase family. As to quaternary structure, monomer. Mg(2+) is required as a cofactor.

Its subcellular location is the cytoplasm. It catalyses the reaction shikimate + ATP = 3-phosphoshikimate + ADP + H(+). It participates in metabolic intermediate biosynthesis; chorismate biosynthesis; chorismate from D-erythrose 4-phosphate and phosphoenolpyruvate: step 5/7. Catalyzes the specific phosphorylation of the 3-hydroxyl group of shikimic acid using ATP as a cosubstrate. This chain is Shikimate kinase, found in Pseudomonas syringae pv. syringae (strain B728a).